The primary structure comprises 271 residues: Solute carrier family 66 member 2 (271 aa).

3 consecutive transmembrane segments (helical) span residues 7-27 (GWLLVPLHQLVSWVAAGAMVF), 49-69 (FSTHVCLVLLVANILRILFWF), and 72-92 (HFESPLLWQSIVMILTMLLML). The region spanning 14 to 80 (HQLVSWVAAG…RHFESPLLWQ (67 aa)) is the PQ-loop 1 domain. At serine 110 the chain carries Phosphoserine. 3 helical membrane-spanning segments follow: residues 145–165 (DYVQCVLAFTGVAGYITYLSI), 168–188 (ALFVETLGFLAVLTEAMLGVP), and 232–252 (VCGLLQVMVDLVILGQAYAFA). Residues 178–233 (AVLTEAMLGVPQLYRNYCHRSTEGMSLKMVLMWTSGDTFKTAYFLLNGAPLQFSVC) enclose the PQ-loop 2 domain.

It is found in the membrane. This is Solute carrier family 66 member 2 (Slc66a2) from Mus musculus (Mouse).